Here is a 66-residue protein sequence, read N- to C-terminus: Vesicular acetylcholine transporter (66 aa).

A helical transmembrane segment spans residues 1–15 (GMGLANLLYAPVLLL). Residues 16–66 (LRNVGLLTRSRSERDVLLDEPPQGLYDAVRLRERPVSGQDGEPRSPPGPFD) are Cytoplasmic-facing. Residues 43 to 66 (AVRLRERPVSGQDGEPRSPPGPFD) form a disordered region.

Belongs to the major facilitator superfamily. Vesicular transporter family. As to quaternary structure, interacts with SEC14L1.

The protein localises to the cytoplasmic vesicle. Its subcellular location is the secretory vesicle. It localises to the synaptic vesicle membrane. The catalysed reaction is acetylcholine(out) + 2 H(+)(in) = acetylcholine(in) + 2 H(+)(out). The enzyme catalyses choline(in) + 2 H(+)(out) = choline(out) + 2 H(+)(in). It carries out the reaction serotonin(in) + 2 H(+)(out) = serotonin(out) + 2 H(+)(in). Its function is as follows. Electrogenic antiporter that exchanges one cholinergic neurotransmitter, acetylcholine or choline, with two intravesicular protons across the membrane of synaptic vesicles. Uses the electrochemical proton gradient established by the V-type proton-pump ATPase to store neurotransmitters inside the vesicles prior to their release via exocytosis. Determines cholinergic vesicular quantal size at presynaptic nerve terminals in developing neuro-muscular junctions with an impact on motor neuron differentiation and innervation pattern. Part of forebrain cholinergic system, regulates hippocampal synapse transmissions that underlie spatial memory formation. Can transport serotonin. This chain is Vesicular acetylcholine transporter (SLC18A3), found in Macaca fuscata fuscata (Japanese macaque).